A 103-amino-acid polypeptide reads, in one-letter code: Large ribosomal subunit protein bL21 (103 aa).

This sequence belongs to the bacterial ribosomal protein bL21 family. In terms of assembly, part of the 50S ribosomal subunit. Contacts protein L20.

This protein binds to 23S rRNA in the presence of protein L20. This Shewanella woodyi (strain ATCC 51908 / MS32) protein is Large ribosomal subunit protein bL21.